Reading from the N-terminus, the 676-residue chain is DNA ligase (676 aa).

NAD(+) contacts are provided by residues 35–39, 84–85, and E118; these read DAEYD and SL. K120 (N6-AMP-lysine intermediate) is an active-site residue. Residues R141, E176, K284, and K308 each contribute to the NAD(+) site. Zn(2+) is bound by residues C402, C405, C420, and C426. The 82-residue stretch at 595–676 folds into the BRCT domain; the sequence is SYLSLIHGKI…WLQYTQSSEN (82 aa).

The protein belongs to the NAD-dependent DNA ligase family. LigA subfamily. The cofactor is Mg(2+). Mn(2+) is required as a cofactor.

The enzyme catalyses NAD(+) + (deoxyribonucleotide)n-3'-hydroxyl + 5'-phospho-(deoxyribonucleotide)m = (deoxyribonucleotide)n+m + AMP + beta-nicotinamide D-nucleotide.. Functionally, DNA ligase that catalyzes the formation of phosphodiester linkages between 5'-phosphoryl and 3'-hydroxyl groups in double-stranded DNA using NAD as a coenzyme and as the energy source for the reaction. It is essential for DNA replication and repair of damaged DNA. The protein is DNA ligase of Ehrlichia chaffeensis (strain ATCC CRL-10679 / Arkansas).